The sequence spans 25 residues: Large ribosomal subunit protein uL30 (25 aa).

The protein belongs to the universal ribosomal protein uL30 family. As to quaternary structure, part of the 50S ribosomal subunit.

This chain is Large ribosomal subunit protein uL30 (rpmD), found in Pseudomonas fluorescens biotype A.